We begin with the raw amino-acid sequence, 404 residues long: Propionate kinase (404 aa).

This sequence belongs to the acetokinase family. PduW subfamily.

It localises to the cytoplasm. It carries out the reaction propanoate + ATP = propanoyl phosphate + ADP. It functions in the pathway polyol metabolism; 1,2-propanediol degradation. Functionally, works with phosphate acetyltransferase (pta) to capture exogenous propionate and regenerate propionyl-CoA during degradation of 1,2-propanediol (1,2-PD). This Citrobacter koseri (strain ATCC BAA-895 / CDC 4225-83 / SGSC4696) protein is Propionate kinase.